A 377-amino-acid chain; its full sequence is F-box protein At2g05970 (377 aa).

The region spanning 8-55 (ASWSELCPDVLRCVFELLSFSDLNRTRSVCSSWHSASRHCVPTQNQIP) is the F-box domain.

The protein is F-box protein At2g05970 of Arabidopsis thaliana (Mouse-ear cress).